A 137-amino-acid chain; its full sequence is Large ribosomal subunit protein uL16c (137 aa).

The protein belongs to the universal ribosomal protein uL16 family. As to quaternary structure, part of the 50S ribosomal subunit.

The protein resides in the plastid. Its subcellular location is the chloroplast. The protein is Large ribosomal subunit protein uL16c of Vigna unguiculata (Cowpea).